A 1050-amino-acid polypeptide reads, in one-letter code: Toll-like receptor 7 (1050 aa).

An N-terminal signal peptide occupies residues 1-26 (MVFSMWTRKRQILIFLNMLLVSRVFG). The Extracellular portion of the chain corresponds to 27 to 837 (FRWFPKTLPC…SLDLYTCELD (811 aa)). LRR repeat units lie at residues 42–64 (IPEA…EGIP), 65–87 (TNTT…SFRR), 89–111 (NHLE…KANV), 126–149 (LSDL…LPSS), 151–170 (HLLS…NLTE), 171–195 (LVNI…SYSI), 203–226 (MRNL…LPPN), 228–247 (LELY…DFNN), 248–273 (LNEL…CTPC), 275–289 (NNSP…FNSL), 290–312 (TELK…WFKN), 314–337 (RNLQ…KFLH), 339–364 (LPNL…TLPH), 369–392 (LENL…SLSV), 396–419 (LPRL…IFKH), 421–443 (ENLK…REVG), 493–516 (HIYG…DFQH), 517–542 (LSFL…LWPL), 543–565 (RELR…AFEE), and 567–589 (QSLE…ITHM). N-linked (GlcNAc...) asparagine glycosylation is found at Asn66 and Asn69. N-linked (GlcNAc...) asparagine glycosylation is found at Asn167, Asn190, and Asn215. A glycan (N-linked (GlcNAc...) asparagine) is linked at Asn387. N-linked (GlcNAc...) asparagine glycans are attached at residues Asn524 and Asn535. A glycan (N-linked (GlcNAc...) asparagine) is linked at Asn591. LRR repeat units follow at residues 596–619 (LRLL…TMES), 620–645 (DSLR…RYLD), 650–673 (LFNL…VFEG), 675–698 (PPNL…RLQL), 699–722 (LKHL…LANC), 724–746 (KSLT…FLED), 747–770 (ALQL…SFPE), and 773–796 (LNNL…VWFV). Asn680 and Asn721 each carry an N-linked (GlcNAc...) asparagine glycan. N-linked (GlcNAc...) asparagine glycosylation is present at Asn800. Residues 838-858 (LTNLILFSVSISSVLFLMVVM) traverse the membrane as a helical segment. The Cytoplasmic portion of the chain corresponds to 859 to 1050 (TTSHLFFWDM…AYSQMFKETV (192 aa)). In terms of domain architecture, TIR spans 890–1034 (SCYDAFIVYD…YFWQCLKNAL (145 aa)).

The protein belongs to the Toll-like receptor family. In terms of assembly, homodimer. Interacts with MYD88 via their respective TIR domains. Interacts with UNC93B1. Interacts with SMPDL3B. Post-translationally, the first cleavage is performed by asparagine endopeptidase or cathepsin family members. This initial cleavage event is followed by a trimming event that is solely cathepsin mediated and required for optimal receptor signaling.

The protein localises to the endosome membrane. Its subcellular location is the endoplasmic reticulum membrane. It localises to the lysosome. It is found in the cytoplasmic vesicle. The protein resides in the phagosome. Activated by guanosine analogs including deoxyguanosine, 7-thia-8-oxoguanosine or 7-deazaguanosine in a RNA-independent manner. In terms of biological role, endosomal receptor that plays a key role in innate and adaptive immunity. Controls host immune response against pathogens through recognition of uridine-containing single strand RNAs (ssRNAs) of viral origin or guanosine analogs. Upon binding to agonists, undergoes dimerization that brings TIR domains from the two molecules into direct contact, leading to the recruitment of TIR-containing downstream adapter MYD88 through homotypic interaction. In turn, the Myddosome signaling complex is formed involving IRAK4, IRAK1, TRAF6, TRAF3 leading to activation of downstream transcription factors NF-kappa-B and IRF7 to induce pro-inflammatory cytokines and interferons, respectively. In plasmacytoid dendritic cells, RNASET2 endonuclease cooperates with PLD3 or PLD4 5'-&gt;3' exonucleases to process RNA and release 2',3'-cyclic guanosine monophosphate (2',3'-cGMP) and cytidine-rich RNA fragments that occupy TLR7 ligand-binding pockets and trigger a signaling-competent state. This Mus musculus (Mouse) protein is Toll-like receptor 7 (Tlr7).